The chain runs to 445 residues: FAS-associated factor 2-A (445 aa).

One can recognise a UBA domain in the interval 12–53 (EQTEKLLQFQDLTGIESMDQCRQTLQQHNWNIEAAVQDRLNE). The stretch at 275 to 353 (SERLEREERN…ERKSECLPAE (79 aa)) forms a coiled coil. Residues 302–354 (RADQEKERKKKEKQEQKRREEEEAQRKQMLEERKKRNLEEEKERKSECLPAEP) form a disordered region. A compositionally biased stretch (basic and acidic residues) spans 303–348 (ADQEKERKKKEKQEQKRREEEEAQRKQMLEERKKRNLEEEKERKSE). Residues 357–439 (DHPDNVKIIF…GLSQSQLLFV (83 aa)) enclose the UBX domain.

It localises to the cytoplasm. It is found in the lipid droplet. The protein resides in the endoplasmic reticulum. Its function is as follows. Plays an important role in endoplasmic reticulum-associated degradation (ERAD) that mediates ubiquitin-dependent degradation of misfolded endoplasmic reticulum proteins. Involved in inhibition of lipid droplet degradation. Involved in stress granule disassembly. This is FAS-associated factor 2-A (faf2-a) from Xenopus laevis (African clawed frog).